The primary structure comprises 429 residues: Adenosylmethionine-8-amino-7-oxononanoate aminotransferase (429 aa).

Trp-52 provides a ligand contact to substrate. 112–113 (GS) contacts pyridoxal 5'-phosphate. Tyr-144 contributes to the substrate binding site. Asp-245 lines the pyridoxal 5'-phosphate pocket. Residues Lys-274 and Gly-307 each coordinate substrate. Lys-274 carries the N6-(pyridoxal phosphate)lysine modification. 308–309 (PT) contacts pyridoxal 5'-phosphate. Arg-391 is a substrate binding site.

This sequence belongs to the class-III pyridoxal-phosphate-dependent aminotransferase family. BioA subfamily. Homodimer. The cofactor is pyridoxal 5'-phosphate.

The protein localises to the cytoplasm. The catalysed reaction is (8S)-8-amino-7-oxononanoate + S-adenosyl-L-methionine = S-adenosyl-4-methylsulfanyl-2-oxobutanoate + (7R,8S)-7,8-diammoniononanoate. It participates in cofactor biosynthesis; biotin biosynthesis; 7,8-diaminononanoate from 8-amino-7-oxononanoate (SAM route): step 1/1. Functionally, catalyzes the transfer of the alpha-amino group from S-adenosyl-L-methionine (SAM) to 7-keto-8-aminopelargonic acid (KAPA) to form 7,8-diaminopelargonic acid (DAPA). It is the only aminotransferase known to utilize SAM as an amino donor. The polypeptide is Adenosylmethionine-8-amino-7-oxononanoate aminotransferase (Buchnera aphidicola subsp. Baizongia pistaciae (strain Bp)).